Here is a 226-residue protein sequence, read N- to C-terminus: Acyl-homoserine-lactone synthase (226 aa).

The protein belongs to the autoinducer synthase family.

The catalysed reaction is a fatty acyl-[ACP] + S-adenosyl-L-methionine = an N-acyl-L-homoserine lactone + S-methyl-5'-thioadenosine + holo-[ACP] + H(+). Functionally, required for the synthesis of OHHL (N-(3-oxohexanoyl)-L-homoserine lactone), an autoinducer molecule. This chain is Acyl-homoserine-lactone synthase (psyI), found in Pseudomonas amygdali pv. tabaci (Pseudomonas syringae pv. tabaci).